An 85-amino-acid polypeptide reads, in one-letter code: Actobindin homolog (85 aa).

The region spanning 35-52 is the WH2 domain; it reads DRNELLSGIKEGKELKKA.

In terms of biological role, is able to bind two actin monomers at high concentrations of G-actin. This chain is Actobindin homolog, found in Entamoeba histolytica.